A 380-amino-acid polypeptide reads, in one-letter code: Cytochrome b (380 aa).

The next 4 membrane-spanning stretches (helical) occupy residues 33-53 (FGSL…FLAM), 77-98 (WLIR…YLHV), 113-133 (WNIG…GYVL), and 178-198 (FFAF…LHLL). Residues His-83 and His-97 each coordinate heme b. His-182 and His-196 together coordinate heme b. His-201 contributes to the a ubiquinone binding site. Helical transmembrane passes span 226-246 (YKDL…ALFS), 288-308 (LGGV…PLLH), 320-340 (LTQI…WIGG), and 347-367 (FITV…IFIP).

It belongs to the cytochrome b family. As to quaternary structure, the cytochrome bc1 complex contains 3 respiratory subunits (MT-CYB, CYC1 and UQCRFS1), 2 core proteins (UQCRC1 and UQCRC2) and probably 6 low-molecular weight proteins. It depends on heme b as a cofactor.

The protein localises to the mitochondrion inner membrane. In terms of biological role, component of the ubiquinol-cytochrome c reductase complex (complex III or cytochrome b-c1 complex) that is part of the mitochondrial respiratory chain. The b-c1 complex mediates electron transfer from ubiquinol to cytochrome c. Contributes to the generation of a proton gradient across the mitochondrial membrane that is then used for ATP synthesis. This chain is Cytochrome b (mt-cyb), found in Neocyttus rhomboidalis (Spiky oreo dory).